A 278-amino-acid chain; its full sequence is UPF0276 protein Sama_1305 (278 aa).

It belongs to the UPF0276 family.

This is UPF0276 protein Sama_1305 from Shewanella amazonensis (strain ATCC BAA-1098 / SB2B).